The primary structure comprises 107 residues: Somatoliberin (107 aa).

The N-terminal stretch at 1-19 (MPLWVFFVILTLTNGSHCS) is a signal peptide. Positions 20-30 (PSPSLPFRIRR) are excised as a propeptide. The residue at position 74 (leucine 74) is a Leucine amide. The propeptide occupies 77 to 107 (QVDSMWADHRQMSLESLLAALLQKHSRDSQG).

Belongs to the glucagon family.

The protein localises to the secreted. In terms of biological role, GRF is released by the hypothalamus and acts on the adenohypophyse to stimulate the secretion of growth hormone. This Mesocricetus auratus (Golden hamster) protein is Somatoliberin (GHRH).